A 352-amino-acid chain; its full sequence is Proton-activated chloride channel (352 aa).

A disordered region spans residues 1–55 (MEAIRKELSRSYQELNEEAEPVAIDPEEAEDEEKEQEEAASAVAPDRDSDRSSPP). Topologically, residues 1–65 (MEAIRKELSR…VRFSRTCLKN (65 aa)) are cytoplasmic. The segment covering 15-38 (LNEEAEPVAIDPEEAEDEEKEQEE) has biased composition (acidic residues). A helical transmembrane segment spans residues 66-86 (FFSVLLILVYLLLMGVAVFLV). At 87-299 (YQTITDFRDK…KDPYIQEIQD (213 aa)) the chain is on the extracellular side. The helical transmembrane segment at 300 to 320 (IITANPWSMIALLCSVFLVLF) threads the bilayer. At 321–352 (KAADFAKLSVKWMIKVRRRHLKKRARELNHIS) the chain is on the cytoplasmic side.

It belongs to the proton-activated chloride channel family.

The protein resides in the cell membrane. The catalysed reaction is chloride(in) = chloride(out). Functionally, chloride channel gated by pH that facilitates the entry of chloride ions into cells upon exposure to extracellular acidic pH. The protein is Proton-activated chloride channel of Xenopus tropicalis (Western clawed frog).